The primary structure comprises 253 residues: 5'-nucleotidase SurE (253 aa).

A divalent metal cation contacts are provided by aspartate 8, aspartate 9, serine 39, and asparagine 95.

This sequence belongs to the SurE nucleotidase family. The cofactor is a divalent metal cation.

The protein resides in the cytoplasm. It catalyses the reaction a ribonucleoside 5'-phosphate + H2O = a ribonucleoside + phosphate. Functionally, nucleotidase that shows phosphatase activity on nucleoside 5'-monophosphates. This is 5'-nucleotidase SurE from Desulfatibacillum aliphaticivorans.